A 134-amino-acid polypeptide reads, in one-letter code: Profilin-1 (134 aa).

This sequence belongs to the profilin family. As to quaternary structure, occurs in many kinds of cells as a complex with monomeric actin in a 1:1 ratio.

The protein localises to the cytoplasm. Its subcellular location is the cytoskeleton. Binds to actin and affects the structure of the cytoskeleton. At high concentrations, profilin prevents the polymerization of actin, whereas it enhances it at low concentrations. By binding to PIP2, it inhibits the formation of IP3 and DG. The protein is Profilin-1 (PRO1) of Nicotiana tabacum (Common tobacco).